A 256-amino-acid polypeptide reads, in one-letter code: Sec-independent protein translocase protein TatC (256 aa).

6 consecutive transmembrane segments (helical) span residues 25–45 (VICV…IYHF), 77–97 (AIVA…AFIA), 117–137 (ILFY…VFSF), 158–178 (FALA…AIIL), 195–215 (PYII…DVFS), and 217–237 (TLLA…ARFY).

It belongs to the TatC family. As to quaternary structure, the Tat system comprises two distinct complexes: a TatABC complex, containing multiple copies of TatA, TatB and TatC subunits, and a separate TatA complex, containing only TatA subunits. Substrates initially bind to the TatABC complex, which probably triggers association of the separate TatA complex to form the active translocon.

Its subcellular location is the cell inner membrane. Part of the twin-arginine translocation (Tat) system that transports large folded proteins containing a characteristic twin-arginine motif in their signal peptide across membranes. Together with TatB, TatC is part of a receptor directly interacting with Tat signal peptides. In Haemophilus influenzae (strain ATCC 51907 / DSM 11121 / KW20 / Rd), this protein is Sec-independent protein translocase protein TatC.